We begin with the raw amino-acid sequence, 415 residues long: Gamma-glutamyl phosphate reductase (415 aa).

The protein belongs to the gamma-glutamyl phosphate reductase family.

It is found in the cytoplasm. It catalyses the reaction L-glutamate 5-semialdehyde + phosphate + NADP(+) = L-glutamyl 5-phosphate + NADPH + H(+). It participates in amino-acid biosynthesis; L-proline biosynthesis; L-glutamate 5-semialdehyde from L-glutamate: step 2/2. Its function is as follows. Catalyzes the NADPH-dependent reduction of L-glutamate 5-phosphate into L-glutamate 5-semialdehyde and phosphate. The product spontaneously undergoes cyclization to form 1-pyrroline-5-carboxylate. The chain is Gamma-glutamyl phosphate reductase from Bacillus cereus (strain 03BB102).